The primary structure comprises 103 residues: Small ribosomal subunit protein uS10 (103 aa).

This sequence belongs to the universal ribosomal protein uS10 family. As to quaternary structure, part of the 30S ribosomal subunit.

Involved in the binding of tRNA to the ribosomes. The polypeptide is Small ribosomal subunit protein uS10 (Borreliella burgdorferi (strain ATCC 35210 / DSM 4680 / CIP 102532 / B31) (Borrelia burgdorferi)).